The following is a 395-amino-acid chain: Flagellin B (395 aa).

The protein belongs to the bacterial flagellin family.

It is found in the secreted. It localises to the bacterial flagellum. Its function is as follows. Flagellin is the subunit protein which polymerizes to form the filaments of bacterial flagella. The protein is Flagellin B (flaB) of Rhizobium meliloti (Ensifer meliloti).